The chain runs to 162 residues: Class I hydrophobin dewC (162 aa).

The first 21 residues, 1–21 (MQFTIASLIATAVLGLQMASA), serve as a signal peptide directing secretion. 4 cysteine pairs are disulfide-bonded: Cys43–Cys119, Cys50–Cys113, Cys51–Cys90, and Cys120–Cys156.

Belongs to the fungal hydrophobin family. As to quaternary structure, self-assembles to form functional amyloid fibrils called rodlets. Self-assembly into fibrillar rodlets occurs spontaneously at hydrophobic:hydrophilic interfaces and the rodlets further associate laterally to form amphipathic monolayers.

The protein localises to the secreted. Its subcellular location is the spore wall. In terms of biological role, aerial growth, conidiation, and dispersal of filamentous fungi in the environment rely upon a capability of their secreting small amphipathic proteins called hydrophobins (HPBs) with low sequence identity. Class I can self-assemble into an outermost layer of rodlet bundles on aerial cell surfaces, conferring cellular hydrophobicity that supports fungal growth, development and dispersal; whereas Class II form highly ordered films at water-air interfaces through intermolecular interactions but contribute nothing to the rodlet structure. DewC is a class I hydrophobin that contributes to the hydrophobicity of the spore surface. This chain is Class I hydrophobin dewC, found in Emericella nidulans (strain FGSC A4 / ATCC 38163 / CBS 112.46 / NRRL 194 / M139) (Aspergillus nidulans).